The chain runs to 199 residues: N-(5'-phosphoribosyl)anthranilate isomerase (199 aa).

This sequence belongs to the TrpF family.

The enzyme catalyses N-(5-phospho-beta-D-ribosyl)anthranilate = 1-(2-carboxyphenylamino)-1-deoxy-D-ribulose 5-phosphate. It functions in the pathway amino-acid biosynthesis; L-tryptophan biosynthesis; L-tryptophan from chorismate: step 3/5. The chain is N-(5'-phosphoribosyl)anthranilate isomerase from Streptococcus pneumoniae serotype 4 (strain ATCC BAA-334 / TIGR4).